We begin with the raw amino-acid sequence, 239 residues long: Xyloglucan-specific endo-beta-1,4-glucanase A (239 aa).

Positions 1–14 are cleaved as a signal peptide; that stretch reads MKLLALSLASLASA. Asparagine 172 carries N-linked (GlcNAc...) asparagine glycosylation.

The protein belongs to the glycosyl hydrolase 12 (cellulase H) family.

It localises to the secreted. It carries out the reaction xyloglucan + H2O = xyloglucan oligosaccharides.. In terms of biological role, catalyzes endohydrolysis of 1,4-beta-D-glucosidic linkages in xyloglucan with retention of the beta-configuration of the glycosyl residues. Specific for xyloglucan and does not hydrolyze other cell wall components. Active against tamarind xyloglucan. The protein is Xyloglucan-specific endo-beta-1,4-glucanase A (xgeA) of Emericella nidulans (strain FGSC A4 / ATCC 38163 / CBS 112.46 / NRRL 194 / M139) (Aspergillus nidulans).